A 641-amino-acid polypeptide reads, in one-letter code: Acetyl-coenzyme A synthetase (641 aa).

CoA contacts are provided by residues 186–189 (RGGK) and threonine 304. Residues 380–382 (GEP), 404–409 (DTWWQT), aspartate 493, and arginine 508 each bind ATP. A CoA-binding site is contributed by serine 516. Arginine 519 lines the ATP pocket. 3 residues coordinate Mg(2+): valine 530, histidine 532, and isoleucine 535. Residue lysine 602 is modified to N6-acetyllysine.

The protein belongs to the ATP-dependent AMP-binding enzyme family. Mg(2+) is required as a cofactor. Acetylated. Deacetylation by the SIR2-homolog deacetylase activates the enzyme.

It catalyses the reaction acetate + ATP + CoA = acetyl-CoA + AMP + diphosphate. In terms of biological role, catalyzes the conversion of acetate into acetyl-CoA (AcCoA), an essential intermediate at the junction of anabolic and catabolic pathways. AcsA undergoes a two-step reaction. In the first half reaction, AcsA combines acetate with ATP to form acetyl-adenylate (AcAMP) intermediate. In the second half reaction, it can then transfer the acetyl group from AcAMP to the sulfhydryl group of CoA, forming the product AcCoA. This Gamma-proteobacterium EBAC31A08 protein is Acetyl-coenzyme A synthetase.